The sequence spans 456 residues: MTYDKAELVALDKKYVWHHLTQHKNFEPAIYVKGEGMRITDIDGKTYLDAVSGGVWTVNVGYGRKEIVDAVAKQMMEMCYFANGIGNVPTIKFSEKLISKMPGMSRVYLSNSGSEANEKAFKIVRQIGQLKHGGKKTGILYRARDYHGTTIGTLSACGQFERKVQYGPFAPGFYEFPDCDVYRSKFGDCADLGVKMAKQLEEVILTVGPDELGAVIVEPMTAGGGILVPPAGYYETIREICDKYELLLIIDEVVCGLGRTGKWFGYQHFNVQPDIVTMAKGVASGYAPISCTVTTEKVFQDFVNDPADTDAYFRDISTFGGCTSGPAAALANIEIIERENLLENCTKMGDRLLEGLKGLMAKHPIIGDVRGKGLFAGIEIVKDRATKEPIAEAVANAMVGAAKQAGVLIGKTSRSFREFNNTLTLCPALIATEADIDEIVAGIDKAFTTVEQKFGL.

Lys280 is subject to N6-(pyridoxal phosphate)lysine.

Belongs to the class-III pyridoxal-phosphate-dependent aminotransferase family. As to quaternary structure, homotetramer. The cofactor is pyridoxal 5'-phosphate.

The enzyme catalyses taurine + pyruvate = sulfoacetaldehyde + L-alanine. Its pathway is organosulfur degradation; alkanesulfonate degradation. Functionally, involved in an anaerobic respiration pathway that converts the sulfonate taurine (2-aminoethanesulfonate) to ammonia, acetate and sulfide. Catalyzes the initial metabolic reaction of anaerobic taurine degradation, i.e. the transamination reaction between taurine and pyruvate leading to sulfoacetaldehyde and alanine. In Bilophila wadsworthia (strain 3_1_6), this protein is Taurine--pyruvate aminotransferase.